The following is a 552-amino-acid chain: Glutamine--tRNA ligase (552 aa).

The 'HIGH' region signature appears at 33–43; sequence PEPNGYLHIGH. ATP-binding positions include 34–36 and 40–46; these read EPN and HIGHAKS. The L-glutamine site is built by Asp66 and Tyr210. Residues Thr229, 259–260, and 267–269 each bind ATP; these read RL and MSK. The short motif at 266 to 270 is the 'KMSKS' region element; the sequence is VMSKR.

Belongs to the class-I aminoacyl-tRNA synthetase family. Monomer.

It is found in the cytoplasm. The enzyme catalyses tRNA(Gln) + L-glutamine + ATP = L-glutaminyl-tRNA(Gln) + AMP + diphosphate. The protein is Glutamine--tRNA ligase of Clostridium perfringens (strain ATCC 13124 / DSM 756 / JCM 1290 / NCIMB 6125 / NCTC 8237 / Type A).